Here is an 888-residue protein sequence, read N- to C-terminus: Probable disease resistance protein At5g63020 (888 aa).

The stretch at 22-66 (LNRNGDYIHGLEENLTALQRALEQIEQRREDLLRKILSEERRGLQ) forms a coiled coil. The 304-residue stretch at 139–442 (AERVDAARVE…GEGFIDRNKG (304 aa)) folds into the NB-ARC domain. Residue 181–188 (GMGGVGKT) participates in ATP binding. LRR repeat units lie at residues 512-533 (VARR…PESP), 534-555 (QLIT…FFRL), 558-580 (MLVV…ISEC), 582-604 (SLQY…VELR), and 605-627 (KLLY…SGLT).

Belongs to the disease resistance NB-LRR family.

Probable disease resistance protein. The chain is Probable disease resistance protein At5g63020 from Arabidopsis thaliana (Mouse-ear cress).